The sequence spans 542 residues: Protein MPA43 (542 aa).

In Saccharomyces cerevisiae (strain ATCC 204508 / S288c) (Baker's yeast), this protein is Protein MPA43 (MPA43).